The following is a 778-amino-acid chain: Double zinc ribbon and ankyrin repeat-containing protein 1 (778 aa).

A phosphoserine mark is found at S179 and S201. DZANK-type zinc fingers lie at residues 230–289 and 359–407; these read CAHC…CVVC and CSRC…GSCG. ANK repeat units lie at residues 631 to 662 and 666 to 695; these read ENKL…DPNC and QGRP…DIDQ. S768 is subject to Phosphoserine.

In terms of assembly, interacts with NINL. Associates with DYNC1H1 and multiple dynein intermediate and light chains as well as actin-binding proteins.

It localises to the cytoplasm. The protein resides in the cytoskeleton. It is found in the microtubule organizing center. Its subcellular location is the centrosome. The protein localises to the cilium basal body. Its function is as follows. Involved in vesicle transport in photoreceptor cells. The protein is Double zinc ribbon and ankyrin repeat-containing protein 1 (Dzank1) of Mus musculus (Mouse).